The following is a 240-amino-acid chain: Dihydromonapterin reductase (240 aa).

Tyr152 serves as the catalytic Proton acceptor.

It belongs to the short-chain dehydrogenases/reductases (SDR) family. FolM subfamily.

The catalysed reaction is (6S)-5,6,7,8-tetrahydrofolate + NADP(+) = 7,8-dihydrofolate + NADPH + H(+). The enzyme catalyses 7,8-dihydromonapterin + NADPH + H(+) = 5,6,7,8-tetrahydromonapterin + NADP(+). Functionally, catalyzes the reduction of dihydromonapterin to tetrahydromonapterin. Also has lower activity with dihydrofolate. The polypeptide is Dihydromonapterin reductase (folM) (Shigella sonnei (strain Ss046)).